The sequence spans 346 residues: Cell division protein ZipA (346 aa).

Topologically, residues 1–6 (MEDLQL) are periplasmic. A helical transmembrane segment spans residues 7 to 27 (VLFVLGAIAIVAVLVHGFWSI). Residues 28-346 (RRQQPKSLKD…DYLHRIRANA (319 aa)) are Cytoplasmic-facing. Disordered stretches follow at residues 76 to 103 (ANEA…QPVE) and 121 to 145 (QPDF…RQEP).

This sequence belongs to the ZipA family. In terms of assembly, interacts with FtsZ via their C-terminal domains.

Its subcellular location is the cell inner membrane. Functionally, essential cell division protein that stabilizes the FtsZ protofilaments by cross-linking them and that serves as a cytoplasmic membrane anchor for the Z ring. Also required for the recruitment to the septal ring of downstream cell division proteins. The protein is Cell division protein ZipA of Shewanella sp. (strain MR-4).